Reading from the N-terminus, the 308-residue chain is Porphobilinogen deaminase (308 aa).

Position 240 is an S-(dipyrrolylmethanemethyl)cysteine (Cys240).

This sequence belongs to the HMBS family. Monomer. Requires dipyrromethane as cofactor.

It carries out the reaction 4 porphobilinogen + H2O = hydroxymethylbilane + 4 NH4(+). It participates in porphyrin-containing compound metabolism; protoporphyrin-IX biosynthesis; coproporphyrinogen-III from 5-aminolevulinate: step 2/4. In terms of biological role, tetrapolymerization of the monopyrrole PBG into the hydroxymethylbilane pre-uroporphyrinogen in several discrete steps. This chain is Porphobilinogen deaminase, found in Desulfitobacterium hafniense (strain DSM 10664 / DCB-2).